A 350-amino-acid polypeptide reads, in one-letter code: Transmembrane protein 185B (350 aa).

7 consecutive transmembrane segments (helical) span residues Leu-16–Ile-36, Trp-41–Gly-61, Phe-81–Val-101, Phe-111–Val-131, Trp-168–Tyr-188, Val-211–Leu-231, and Thr-240–Thr-260.

This sequence belongs to the TMEM185 family.

Its subcellular location is the membrane. In Mus musculus (Mouse), this protein is Transmembrane protein 185B (Tmem185b).